Consider the following 215-residue polypeptide: Ribose-5-phosphate isomerase A (215 aa).

Substrate is bound by residues 26-29 (TGST), 79-82 (DGAD), and 92-95 (KGGG). The active-site Proton acceptor is E101. Position 119 (K119) interacts with substrate.

The protein belongs to the ribose 5-phosphate isomerase family. As to quaternary structure, homodimer.

The enzyme catalyses aldehydo-D-ribose 5-phosphate = D-ribulose 5-phosphate. The protein operates within carbohydrate degradation; pentose phosphate pathway; D-ribose 5-phosphate from D-ribulose 5-phosphate (non-oxidative stage): step 1/1. Functionally, catalyzes the reversible conversion of ribose-5-phosphate to ribulose 5-phosphate. The sequence is that of Ribose-5-phosphate isomerase A from Xylella fastidiosa (strain Temecula1 / ATCC 700964).